We begin with the raw amino-acid sequence, 379 residues long: MSATLALTEQLIARASVTPDDQHCQQIMTERLAALGFECETIASHGVTNLWAVKRGTDGRDGKLLAFAGHTDVVPTGPLEQWTSPPFIPAHRDGKLYGRGAADMKTSLAAFVVASEEFVAAHPDHRGAIAFLITSDEEGPATDGTVKVVELLQARGERLDYCIVGEPTSTTELGDVVKNGRRGSMSGELVVKGVQGHIAYPHLAKNPIHLLAPALAELAAEQWDAGNEYFPPTTWQVSNLHAGTGATNVIPGHADLLFNFRFSTASTVEGLQARVHAILDKHGLEYTLKWSVSGLPFLTPRGELSGALEHAIRTETGITTELSTTGGTSDGRFIARICPQVIEFGPPNGSIHKIDEHIEVRFVDPLKNVYRRVLEQLIA.

Residue histidine 70 coordinates Zn(2+). The active site involves aspartate 72. Zn(2+) is bound at residue aspartate 103. Glutamate 137 (proton acceptor) is an active-site residue. Residues glutamate 138, glutamate 166, and histidine 352 each coordinate Zn(2+).

The protein belongs to the peptidase M20A family. DapE subfamily. Homodimer. Zn(2+) is required as a cofactor. Requires Co(2+) as cofactor.

It catalyses the reaction N-succinyl-(2S,6S)-2,6-diaminopimelate + H2O = (2S,6S)-2,6-diaminopimelate + succinate. It participates in amino-acid biosynthesis; L-lysine biosynthesis via DAP pathway; LL-2,6-diaminopimelate from (S)-tetrahydrodipicolinate (succinylase route): step 3/3. Functionally, catalyzes the hydrolysis of N-succinyl-L,L-diaminopimelic acid (SDAP), forming succinate and LL-2,6-diaminopimelate (DAP), an intermediate involved in the bacterial biosynthesis of lysine and meso-diaminopimelic acid, an essential component of bacterial cell walls. The protein is Succinyl-diaminopimelate desuccinylase of Burkholderia cenocepacia (strain ATCC BAA-245 / DSM 16553 / LMG 16656 / NCTC 13227 / J2315 / CF5610) (Burkholderia cepacia (strain J2315)).